The primary structure comprises 371 residues: tRNA-specific 2-thiouridylase MnmA (371 aa).

Residues 24-31 and leucine 50 contribute to the ATP site; that span reads AMSGGVDS. Cysteine 119 (nucleophile) is an active-site residue. A disulfide bond links cysteine 119 and cysteine 215. Glycine 143 provides a ligand contact to ATP. Residues 165–167 are interaction with tRNA; that stretch reads KDQ. Cysteine 215 serves as the catalytic Cysteine persulfide intermediate.

It belongs to the MnmA/TRMU family.

The protein localises to the cytoplasm. The catalysed reaction is S-sulfanyl-L-cysteinyl-[protein] + uridine(34) in tRNA + AH2 + ATP = 2-thiouridine(34) in tRNA + L-cysteinyl-[protein] + A + AMP + diphosphate + H(+). Functionally, catalyzes the 2-thiolation of uridine at the wobble position (U34) of tRNA, leading to the formation of s(2)U34. This Neorickettsia sennetsu (strain ATCC VR-367 / Miyayama) (Ehrlichia sennetsu) protein is tRNA-specific 2-thiouridylase MnmA.